Consider the following 883-residue polypeptide: Valine--tRNA ligase (883 aa).

Positions 46–56 match the 'HIGH' region motif; it reads PNVTGKLHLGH. A 'KMSKS' region motif is present at residues 520–524; the sequence is KMSKS. Lysine 523 serves as a coordination point for ATP. A coiled-coil region spans residues 809-844; the sequence is LADLLNVEEELARLEKELAKWQKELDMVGKKLSNER.

Belongs to the class-I aminoacyl-tRNA synthetase family. ValS type 1 subfamily. In terms of assembly, monomer.

Its subcellular location is the cytoplasm. The enzyme catalyses tRNA(Val) + L-valine + ATP = L-valyl-tRNA(Val) + AMP + diphosphate. Catalyzes the attachment of valine to tRNA(Val). As ValRS can inadvertently accommodate and process structurally similar amino acids such as threonine, to avoid such errors, it has a 'posttransfer' editing activity that hydrolyzes mischarged Thr-tRNA(Val) in a tRNA-dependent manner. This chain is Valine--tRNA ligase, found in Streptococcus thermophilus (strain CNRZ 1066).